The chain runs to 510 residues: ATP synthase subunit alpha (510 aa).

169–176 (GDRQTGKT) contacts ATP.

It belongs to the ATPase alpha/beta chains family. As to quaternary structure, F-type ATPases have 2 components, CF(1) - the catalytic core - and CF(0) - the membrane proton channel. CF(1) has five subunits: alpha(3), beta(3), gamma(1), delta(1), epsilon(1). CF(0) has three main subunits: a(1), b(2) and c(9-12). The alpha and beta chains form an alternating ring which encloses part of the gamma chain. CF(1) is attached to CF(0) by a central stalk formed by the gamma and epsilon chains, while a peripheral stalk is formed by the delta and b chains.

Its subcellular location is the cell inner membrane. It catalyses the reaction ATP + H2O + 4 H(+)(in) = ADP + phosphate + 5 H(+)(out). In terms of biological role, produces ATP from ADP in the presence of a proton gradient across the membrane. The alpha chain is a regulatory subunit. In Anaeromyxobacter sp. (strain K), this protein is ATP synthase subunit alpha.